A 271-amino-acid chain; its full sequence is Phosphoribosylformylglycinamidine synthase subunit PurQ (271 aa).

One can recognise a Glutamine amidotransferase type-1 domain in the interval 7–253 (KVAVLRMEGT…FGYQVGRREG (247 aa)). Catalysis depends on cysteine 104, which acts as the Nucleophile. Active-site residues include histidine 238 and glutamate 240.

As to quaternary structure, part of the FGAM synthase complex composed of 1 PurL, 1 PurQ and 2 PurS subunits.

It localises to the cytoplasm. The enzyme catalyses N(2)-formyl-N(1)-(5-phospho-beta-D-ribosyl)glycinamide + L-glutamine + ATP + H2O = 2-formamido-N(1)-(5-O-phospho-beta-D-ribosyl)acetamidine + L-glutamate + ADP + phosphate + H(+). The catalysed reaction is L-glutamine + H2O = L-glutamate + NH4(+). The protein operates within purine metabolism; IMP biosynthesis via de novo pathway; 5-amino-1-(5-phospho-D-ribosyl)imidazole from N(2)-formyl-N(1)-(5-phospho-D-ribosyl)glycinamide: step 1/2. Part of the phosphoribosylformylglycinamidine synthase complex involved in the purines biosynthetic pathway. Catalyzes the ATP-dependent conversion of formylglycinamide ribonucleotide (FGAR) and glutamine to yield formylglycinamidine ribonucleotide (FGAM) and glutamate. The FGAM synthase complex is composed of three subunits. PurQ produces an ammonia molecule by converting glutamine to glutamate. PurL transfers the ammonia molecule to FGAR to form FGAM in an ATP-dependent manner. PurS interacts with PurQ and PurL and is thought to assist in the transfer of the ammonia molecule from PurQ to PurL. The chain is Phosphoribosylformylglycinamidine synthase subunit PurQ from Archaeoglobus fulgidus (strain ATCC 49558 / DSM 4304 / JCM 9628 / NBRC 100126 / VC-16).